A 367-amino-acid polypeptide reads, in one-letter code: Protein valois (367 aa).

WD repeat units lie at residues 101–139 (QAEH…RDSQ), 152–192 (AHPT…MVST), and 198–238 (SHTD…PSST). The interval 309–367 (LAAMSNLPASVKVANVQAGHEFIYTHQDTHSRLTDAVWTDDSTLITIGHGRKMVTHAIK) is interaction with csul.

As to quaternary structure, interacts with csul and tud. In oocytes, localizes to pole plasm and nuage (at protein level). Expressed stronger in the germline than in somatic cells. In the germarium it sometimes concentrates in perinuclear aggregates that disappear by stage 2 of oogenesis. At later stages, it is uniformly distributed in the nurse cells and oocyte, as well as in young embryos, with no particular enrichment at the posterior or inside the pole cells (at protein level).

It localises to the cytoplasm. Functionally, involved in specific localization of cytoplasmic proteins during the formation of pole plasm. Required for synthesis and/or stability of oskar protein (osk) and localization of tudor (tud) in both the nuage and posterior pole of the oocyte. Required for normal posterior localization of osk in later stages of oogenesis and for posterior localization of the vasa (vas) protein during the entire process of pole plasm assembly. May act by regulating the complex that contains the arginine N-methyltransferase csul. In Drosophila melanogaster (Fruit fly), this protein is Protein valois (vls).